We begin with the raw amino-acid sequence, 397 residues long: Acetate kinase (397 aa).

Position 7 (asparagine 7) interacts with Mg(2+). Lysine 14 is an ATP binding site. Arginine 90 is a substrate binding site. Aspartate 147 acts as the Proton donor/acceptor in catalysis. Residues 207-211 (HLGNG), 282-284 (DFR), and 330-334 (GLGEN) each bind ATP. Glutamate 383 is a binding site for Mg(2+).

Belongs to the acetokinase family. As to quaternary structure, homodimer. Mg(2+) is required as a cofactor. The cofactor is Mn(2+).

It localises to the cytoplasm. It catalyses the reaction acetate + ATP = acetyl phosphate + ADP. It participates in metabolic intermediate biosynthesis; acetyl-CoA biosynthesis; acetyl-CoA from acetate: step 1/2. In terms of biological role, catalyzes the formation of acetyl phosphate from acetate and ATP. Can also catalyze the reverse reaction. This chain is Acetate kinase, found in Clostridium botulinum (strain ATCC 19397 / Type A).